A 271-amino-acid polypeptide reads, in one-letter code: MPQGYLQFPNIDPVLFSIGPLAVRWYGLMYLVGFLFAMWLANRRADRAGSGWTREQVSDLLFAGFLGVVIGGRVGYVIFYNFDLFLADPLYLFKVWTGGMSFHGGLLGVITAMFWYARKNQRTFFGVADFVAPLVPFGLGMGRIGNFMNSELWGRVTDVPWAFVFPNGGPLPRHPSQLYEFALEGVVLFFILNWFIGKPRPLGSVSGLFLAGYGTFRFLVEYVREPDAQLGLFGGFISMGQILSLPMVIIGILMMVWSYKRGLYQDRVAAK.

Transmembrane regions (helical) follow at residues 21–41 (LAVR…MWLA), 60–80 (LLFA…VIFY), 95–115 (VWTG…AMFW), 124–144 (FFGV…MGRI), 177–197 (QLYE…WFIG), 203–223 (GSVS…VEYV), and 236–256 (FISM…LMMV). A 1,2-diacyl-sn-glycero-3-phospho-(1'-sn-glycerol) is bound at residue R143.

Belongs to the Lgt family.

The protein resides in the cell inner membrane. The enzyme catalyses L-cysteinyl-[prolipoprotein] + a 1,2-diacyl-sn-glycero-3-phospho-(1'-sn-glycerol) = an S-1,2-diacyl-sn-glyceryl-L-cysteinyl-[prolipoprotein] + sn-glycerol 1-phosphate + H(+). Its pathway is protein modification; lipoprotein biosynthesis (diacylglyceryl transfer). Its function is as follows. Catalyzes the transfer of the diacylglyceryl group from phosphatidylglycerol to the sulfhydryl group of the N-terminal cysteine of a prolipoprotein, the first step in the formation of mature lipoproteins. In Vibrio cholerae serotype O1 (strain ATCC 39541 / Classical Ogawa 395 / O395), this protein is Phosphatidylglycerol--prolipoprotein diacylglyceryl transferase.